The sequence spans 175 residues: Nucleoside triphosphate/diphosphate phosphatase (175 aa).

Catalysis depends on Arg23, which acts as the Proton donor. Mg(2+) is bound by residues Asn87, Asp103, Asp105, Asp107, Asp120, and Glu123.

It belongs to the Ntdp family. The cofactor is Mg(2+).

The catalysed reaction is a ribonucleoside 5'-triphosphate + H2O = a ribonucleoside 5'-diphosphate + phosphate + H(+). It catalyses the reaction a ribonucleoside 5'-diphosphate + H2O = a ribonucleoside 5'-phosphate + phosphate + H(+). Has nucleoside phosphatase activity towards nucleoside triphosphates and nucleoside diphosphates. The chain is Nucleoside triphosphate/diphosphate phosphatase from Listeria innocua serovar 6a (strain ATCC BAA-680 / CLIP 11262).